We begin with the raw amino-acid sequence, 649 residues long: Probable potassium transport system protein Kup (649 aa).

The next 12 helical transmembrane spans lie at 1–21 (MAIVALGVVYGDIGTSPLYTM), 42–62 (ILSLVFWSITLITTVKYVFIA), 84–104 (GAWLAIPAMLGGAAFLADSVL), 126–146 (IMSGNKELTLMITIVIIVCLF), 159–179 (TFGTVVMIWFSFLAVVGLVNL), 195–215 (VEFLFSHHNAAGLAVMGTVFL), 235–255 (IYFTWPFIKIALVFCYFGQGA), 286–306 (VAVLLSVCAGVIASQALITGA), 334–354 (LYIPVVNAVLCVSTLLVLAMF), 364–384 (YGLALTVTMITTTILLAVYIW), 390–410 (VGAVVFTVVFLAIQFLFFFAS), and 414–434 (FLHGGWFTMLLTLAILLIMYT).

Belongs to the HAK/KUP transporter (TC 2.A.72) family.

The protein resides in the cell membrane. The catalysed reaction is K(+)(in) + H(+)(in) = K(+)(out) + H(+)(out). Its function is as follows. Transport of potassium into the cell. Likely operates as a K(+):H(+) symporter. This Bifidobacterium adolescentis (strain ATCC 15703 / DSM 20083 / NCTC 11814 / E194a) protein is Probable potassium transport system protein Kup.